The following is a 57-amino-acid chain: Small ribosomal subunit protein bS21 (57 aa).

This sequence belongs to the bacterial ribosomal protein bS21 family.

This chain is Small ribosomal subunit protein bS21, found in Phytoplasma australiense.